Reading from the N-terminus, the 819-residue chain is Lon protease (819 aa).

The disordered stretch occupies residues 1–36 (MDSTTNSDSPILDPNPEDVEKLLDESEEESEDQSTE). In terms of domain architecture, Lon N-terminal spans 43-240 (LFILPLNKRP…KALILLKKEL (198 aa)). 393 to 400 (GPPGVGKT) is an ATP binding site. A Lon proteolytic domain is found at 635–817 (STPVGVATGL…DDVLKVAFPK (183 aa)). Active-site residues include Ser723 and Lys766.

This sequence belongs to the peptidase S16 family. As to quaternary structure, homohexamer. Organized in a ring with a central cavity.

It is found in the cytoplasm. The enzyme catalyses Hydrolysis of proteins in presence of ATP.. ATP-dependent serine protease that mediates the selective degradation of mutant and abnormal proteins as well as certain short-lived regulatory proteins. Required for cellular homeostasis and for survival from DNA damage and developmental changes induced by stress. Degrades polypeptides processively to yield small peptide fragments that are 5 to 10 amino acids long. Binds to DNA in a double-stranded, site-specific manner. The protein is Lon protease of Chlamydia pneumoniae (Chlamydophila pneumoniae).